The chain runs to 160 residues: Urease accessory protein UreE (160 aa).

This sequence belongs to the UreE family.

The protein resides in the cytoplasm. In terms of biological role, involved in urease metallocenter assembly. Binds nickel. Probably functions as a nickel donor during metallocenter assembly. This chain is Urease accessory protein UreE, found in Acinetobacter baumannii (strain AB307-0294).